Consider the following 753-residue polypeptide: Polyadenylate-binding protein, cytoplasmic and nuclear (753 aa).

The segment covering 1 to 43 (MSAEASTTPAAETPVNGTPETSTTPAAPAAEATAAETAAPSTS) has biased composition (low complexity). Positions 1 to 49 (MSAEASTTPAAETPVNGTPETSTTPAAPAAEATAAETAAPSTSQPHSAS) are disordered. 4 consecutive RRM domains span residues 48-126 (ASLY…WSQR), 136-213 (GNVF…HHIS), 229-306 (TNVY…RAQK), and 332-460 (VNLY…LAQR). 3 disordered regions span residues 363–417 (VMRD…SDKK), 607–649 (RGPG…PAAG), and 727–753 (GTEG…ENKS). Positions 376–417 (DSDKEKKEESKEEKPEAAEKTEEAAKESGDDQDKENKKSDKK) are enriched in basic and acidic residues. The segment covering 607–619 (RGPGYGQGRGGVP) has biased composition (gly residues). Low complexity predominate over residues 633–649 (QNAQPAAGRGEEAPAAG). A PABC domain is found at 647-724 (AAGLTAQSLA…ALSVYDEYMK (78 aa)). Residues 737–753 (PKPKEAATEESTEENKS) are compositionally biased toward basic and acidic residues.

The protein belongs to the polyadenylate-binding protein type-1 family.

Its subcellular location is the cytoplasm. The protein localises to the nucleus. Functionally, binds the poly(A) tail of mRNA. Appears to be an important mediator of the multiple roles of the poly(A) tail in mRNA biogenesis, stability and translation. In the nucleus, involved in both mRNA cleavage and polyadenylation. Is also required for efficient mRNA export to the cytoplasm. Acts in concert with a poly(A)-specific nuclease (PAN) to affect poly(A) tail shortening, which may occur concomitantly with either nucleocytoplasmic mRNA transport or translational initiation. In the cytoplasm, stimulates translation initiation and regulates mRNA decay through translation termination-coupled poly(A) shortening, probably mediated by PAN. The chain is Polyadenylate-binding protein, cytoplasmic and nuclear (pab1) from Aspergillus terreus (strain NIH 2624 / FGSC A1156).